The sequence spans 179 residues: TM2 domain-containing protein Y66D12A.21 (179 aa).

The N-terminal stretch at 1–18 (MRQLLLTLSLISVSASDA) is a signal peptide. Over 19–82 (TVKCDDLDPN…IFNRTVPSAC (64 aa)) the chain is Extracellular. Residue N75 is glycosylated (N-linked (GlcNAc...) asparagine). The chain crosses the membrane as a helical span at residues 83-105 (HYGAHVSYTTTVLLSIFLGFFGI). The region spanning 88–135 (VSYTTTVLLSIFLGFFGIDRIYLGYYALGLIKMFSLGGLFVFWLVDII) is the TM2 domain. Residues 106-109 (DRIY) lie on the Cytoplasmic side of the membrane. Residues 110–132 (LGYYALGLIKMFSLGGLFVFWLV) form a helical membrane-spanning segment. At 133–179 (DIILISLQLLGPADGTAYAMAYYGPKAQMIRFDSHTNFSFYTCDGCL) the chain is on the extracellular side. A glycan (N-linked (GlcNAc...) asparagine) is linked at N169.

Belongs to the TM2 family.

It is found in the membrane. The chain is TM2 domain-containing protein Y66D12A.21 from Caenorhabditis elegans.